The primary structure comprises 118 residues: UPF0231 protein PM0457 (118 aa).

It belongs to the UPF0231 family.

This chain is UPF0231 protein PM0457, found in Pasteurella multocida (strain Pm70).